The primary structure comprises 128 residues: Large ribosomal subunit protein uL22 (128 aa).

Belongs to the universal ribosomal protein uL22 family. As to quaternary structure, part of the 50S ribosomal subunit.

This protein binds specifically to 23S rRNA; its binding is stimulated by other ribosomal proteins, e.g. L4, L17, and L20. It is important during the early stages of 50S assembly. It makes multiple contacts with different domains of the 23S rRNA in the assembled 50S subunit and ribosome. Functionally, the globular domain of the protein is located near the polypeptide exit tunnel on the outside of the subunit, while an extended beta-hairpin is found that lines the wall of the exit tunnel in the center of the 70S ribosome. This is Large ribosomal subunit protein uL22 from Nitrobacter hamburgensis (strain DSM 10229 / NCIMB 13809 / X14).